Here is a 446-residue protein sequence, read N- to C-terminus: MANVIVIGAQWGDEGKGKITDLLSRSADVVVRPQGGVNAGHTIVVQGQTFKLHLIPSGILYPETECIIGSGTVIDPKVLLEELGQLKSLNVATDNLFISQTAHITMPYHRLFDQASEQRRGEKKIGTTGRGIGPTYADKSERTGIRVVDLMNPDELQEKLEWTINYKNVILEKLYNLDPLDPKVVIEEYINYADQLRPYVIDSSLKIYEAIQERKNILFEGAQGTLLDLDHGTYPYVTSSNPIAGGACVGSGIGPTVIDRVIGVAKAYTTRVGEGPFPTELHGDIGQQLCDRGAEFGTTTGRRRRCGWFDAVIGRYAVRVNGLDCLAITKLDVLDELAEIKVCTAYELDGQTCHHFPSNASEFARCTPIYETLPGWQQSTENCRSLEDLPKEALDYLKFLAELMEVSIAIVSLGASRDQTIIVEDPIHGPKRALLDENGDPVTTHE.

GTP is bound by residues 12–18 (GDEGKGK) and 40–42 (GHT). Aspartate 13 acts as the Proton acceptor in catalysis. Residues aspartate 13 and glycine 40 each coordinate Mg(2+). Residues 13-16 (DEGK), 38-41 (NAGH), threonine 128, arginine 142, glutamine 223, threonine 238, and arginine 302 contribute to the IMP site. Histidine 41 serves as the catalytic Proton donor. 298-304 (TTTGRRR) contacts substrate. GTP-binding positions include arginine 304, 330-332 (KLD), and 412-414 (SLG).

This sequence belongs to the adenylosuccinate synthetase family. In terms of assembly, homodimer. It depends on Mg(2+) as a cofactor.

It localises to the cytoplasm. It carries out the reaction IMP + L-aspartate + GTP = N(6)-(1,2-dicarboxyethyl)-AMP + GDP + phosphate + 2 H(+). It functions in the pathway purine metabolism; AMP biosynthesis via de novo pathway; AMP from IMP: step 1/2. Plays an important role in the de novo pathway of purine nucleotide biosynthesis. Catalyzes the first committed step in the biosynthesis of AMP from IMP. This is Adenylosuccinate synthetase from Crocosphaera subtropica (strain ATCC 51142 / BH68) (Cyanothece sp. (strain ATCC 51142)).